Reading from the N-terminus, the 522-residue chain is Protein tweety homolog 3 (522 aa).

At 1–43 (MAAAISYTPPWWVNLLHRLPHLNLQWESLNGDFRPEDPDYQQS) the chain is on the extracellular side. A helical transmembrane segment spans residues 44–64 (LMLLACVALSCLALDLLFLLF). The Cytoplasmic segment spans residues 65–87 (YSFWFCCRHRKTEENTNADCCCT). Residues 88 to 108 (VWCVIVATLVCSAGIAVGFYG) traverse the membrane as a helical segment. The Extracellular segment spans residues 109–211 (NGETSDGIHR…VDLFDWYRWL (103 aa)). Residues Glu-111 and Asp-114 each contribute to the Ca(2+) site. N-linked (GlcNAc...) asparagine glycans are attached at residues Asn-127 and Asn-145. Residues 212-232 (GYLGLLLFHVFICLLVLFGLI) traverse the membrane as a helical segment. Topologically, residues 233–238 (RNSKGT) are cytoplasmic. The chain crosses the membrane as a helical span at residues 239 to 259 (LICVCFLGMMALIISWASMGL). At 260–386 (ELAVAVGSSD…LTGFCYDGVE (127 aa)) the chain is on the extracellular side. 2 cysteine pairs are disulfide-bonded: Cys-271–Cys-381 and Cys-299–Cys-366. N-linked (GlcNAc...) asparagine glycosylation occurs at Asn-351. The chain crosses the membrane as a helical span at residues 387 to 407 (GLIYLVLFSFVTALMFSSIVC). Residues 408 to 522 (SVPHTWQQRR…TNRPETDPVH (115 aa)) are Cytoplasmic-facing. A disordered region spans residues 483–522 (QNPRCENTPLIGRESPPPSYTSSMRAKYLATNRPETDPVH).

Belongs to the tweety family. As to quaternary structure, homotetramer; disulfide-linked. Forms cis-homodimers in the presence of Ca(2+).

It localises to the cell membrane. The enzyme catalyses chloride(in) = chloride(out). It catalyses the reaction L-glutamate(out) = L-glutamate(in). May act as a calcium-independent, swelling-dependent volume-regulated anion channel (VRAC-swell) which plays a pivotal role in the process of regulatory volume decrease (RVD) in the brain through the efflux of anions like chloride and organic osmolytes like glutamate. Probable large-conductance Ca(2+)-activated chloride channel. This Xenopus laevis (African clawed frog) protein is Protein tweety homolog 3 (ttyh3).